Reading from the N-terminus, the 290-residue chain is Ribosomal protein L11 methyltransferase (290 aa).

S-adenosyl-L-methionine-binding residues include threonine 136, glycine 159, aspartate 181, and asparagine 228.

The protein belongs to the methyltransferase superfamily. PrmA family.

The protein resides in the cytoplasm. The catalysed reaction is L-lysyl-[protein] + 3 S-adenosyl-L-methionine = N(6),N(6),N(6)-trimethyl-L-lysyl-[protein] + 3 S-adenosyl-L-homocysteine + 3 H(+). In terms of biological role, methylates ribosomal protein L11. This chain is Ribosomal protein L11 methyltransferase, found in Allorhizobium ampelinum (strain ATCC BAA-846 / DSM 112012 / S4) (Agrobacterium vitis (strain S4)).